Consider the following 379-residue polypeptide: Tryptophan 2,3-dioxygenase (379 aa).

Substrate is bound by residues 57–61 (FIITH) and Arg-128. His-312 serves as a coordination point for heme. Position 327 (Thr-327) interacts with substrate.

This sequence belongs to the tryptophan 2,3-dioxygenase family. Homotetramer. Dimer of dimers. Heme serves as cofactor.

It carries out the reaction L-tryptophan + O2 = N-formyl-L-kynurenine. It functions in the pathway amino-acid degradation; L-tryptophan degradation via kynurenine pathway; L-kynurenine from L-tryptophan: step 1/2. It participates in pigment biosynthesis; ommochrome biosynthesis. Functionally, heme-dependent dioxygenase that catalyzes the oxidative cleavage of the L-tryptophan (L-Trp) pyrrole ring and converts L-tryptophan to N-formyl-L-kynurenine. Catalyzes the oxidative cleavage of the indole moiety. The protein is Tryptophan 2,3-dioxygenase of Drosophila yakuba (Fruit fly).